Reading from the N-terminus, the 228-residue chain is 5'-methylthioadenosine/S-adenosylhomocysteine nucleosidase (228 aa).

Glu11 acts as the Proton acceptor in catalysis. Residues Gly77, Ile151, and 172–173 each bind substrate; that span reads ME. The Proton donor role is filled by Asp196.

Belongs to the PNP/UDP phosphorylase family. MtnN subfamily.

It carries out the reaction S-adenosyl-L-homocysteine + H2O = S-(5-deoxy-D-ribos-5-yl)-L-homocysteine + adenine. The enzyme catalyses S-methyl-5'-thioadenosine + H2O = 5-(methylsulfanyl)-D-ribose + adenine. The catalysed reaction is 5'-deoxyadenosine + H2O = 5-deoxy-D-ribose + adenine. It functions in the pathway amino-acid biosynthesis; L-methionine biosynthesis via salvage pathway; S-methyl-5-thio-alpha-D-ribose 1-phosphate from S-methyl-5'-thioadenosine (hydrolase route): step 1/2. Catalyzes the irreversible cleavage of the glycosidic bond in both 5'-methylthioadenosine (MTA) and S-adenosylhomocysteine (SAH/AdoHcy) to adenine and the corresponding thioribose, 5'-methylthioribose and S-ribosylhomocysteine, respectively. Also cleaves 5'-deoxyadenosine, a toxic by-product of radical S-adenosylmethionine (SAM) enzymes, into 5-deoxyribose and adenine. The protein is 5'-methylthioadenosine/S-adenosylhomocysteine nucleosidase of Staphylococcus carnosus (strain TM300).